The following is a 720-amino-acid chain: Nucleoporin NUP2 (720 aa).

The segment at 1-33 (MAKRVADAQIQRETYDSNESDDDVTPSTKVASS) is disordered. Residues S17 and S20 each carry the phosphoserine modification. Residues 35-50 (VMNRRKIAMPKRRMAF) are interaction with SRP1 NLS binding site 1. Disordered regions lie at residues 52–92 (PFGS…SNSR) and 136–278 (KSIE…VDNN). The stretch at 67–69 (FSF) is one FXF 1 repeat. Residues 81–92 (VDNSPTTESNSR) are compositionally biased toward polar residues. Position 137 is a phosphoserine (S137). Residues 147-159 (NDAKPAKVEDVQK) are compositionally biased toward basic and acidic residues. Residue S165 is modified to Phosphoserine. The FXFG 1 repeat unit spans residues 189–192 (FSFG). A compositionally biased stretch (basic and acidic residues) spans 193–202 (PKKENRKKDE). 2 positions are modified to phosphoserine: S203 and S205. 2 FXF repeats span residues 216 to 218 (FKF) and 247 to 249 (FSF). Over residues 243 to 278 (NAKPFSFSSATSTTEQTKSKNPLSLTEATKTNVDNN) the composition is skewed to polar residues. FXFG repeat units follow at residues 285–288 (FTFG), 302–305 (FVFG), and 318–321 (FTFG). Residues 315–324 (KSSFTFGSTT) show a composition bias toward polar residues. Residues 315-604 (KSSFTFGSTT…KPINLQNGEE (290 aa)) form a disordered region. Over residues 345-360 (SNDSNPSFSFSIPSKN) the composition is skewed to low complexity. Residues S348 and S351 each carry the phosphoserine modification. Residues 352–354 (FSF) form an FXF 4 repeat. T361 carries the post-translational modification Phosphothreonine. One copy of the FXFG 5 repeat lies at 369-372 (FSFG). Polar residues predominate over residues 373-384 (VPNSSKNETSKP). Residues 386 to 389 (FSFG) form an FXFG 6 repeat. Positions 424-435 (TEKEKESKKDSK) are enriched in basic and acidic residues. 5 FXFG repeats span residues 438-441 (FSFG), 474-477 (FSFG), 493-496 (FTFG), 511-514 (FSFG), and 524-527 (FSFG). The segment covering 479-495 (NTNTTKTADTKAPTFTF) has biased composition (low complexity). The span at 513 to 533 (FGTSQPNNTPSFSFGKTTANL) shows a compositional bias: polar residues. The segment covering 534–548 (PANSSTSPAPSIPST) has biased composition (low complexity). Residues 550 to 552 (FKF) form an FXF 5 repeat. Over residues 574–584 (TEATGNESQDA) the composition is skewed to polar residues. The residue at position 581 (S581) is a Phosphoserine. The RanBD1 domain maps to 583–720 (DATKVDATPE…AIEDAKKEMK (138 aa)). At T590 the chain carries Phosphothreonine.

In terms of assembly, component of the nuclear pore complex (NPC). NPC constitutes the exclusive means of nucleocytoplasmic transport. NPCs allow the passive diffusion of ions and small molecules and the active, nuclear transport receptor-mediated bidirectional transport of macromolecules such as proteins, RNAs, ribonucleoparticles (RNPs), and ribosomal subunits across the nuclear envelope. Due to its 8-fold rotational symmetry, all subunits are present with 8 copies or multiples thereof. Binds to the nuclear basket of the NPC through NUP60 in a (GSP1, GSP2) GTPase-GTP-dependent manner. Interacts through its FG repeats with nuclear transport factors. Interacts with KAP122.

It localises to the nucleus. The protein resides in the nuclear pore complex. Its subcellular location is the nucleus membrane. In terms of biological role, functions as a component of the nuclear pore complex (NPC). NPC components, collectively referred to as nucleoporins (NUPs), can play the role of both NPC structural components and of docking or interaction partners for transiently associated nuclear transport factors. Active directional transport is assured by both, a Phe-Gly (FG) repeat affinity gradient for these transport factors across the NPC and a transport cofactor concentration gradient across the nuclear envelope (GSP1 and GSP2 GTPases associated predominantly with GTP in the nucleus, with GDP in the cytoplasm). As one of the FG repeat nucleoporins NUP2 is involved in interactions with and guidance of nuclear transport receptors such as SRP1-KAP95 (importin alpha and beta) through the NPC. Like the closely related NUP1 it also plays an important role in disassembling and recycling SRP1-KAP95 to the cytoplasm after nuclear import. Upon entry of the heterotrimeric SRP1-KAP95-cargo complex in the nucleus, NUP2 binds through its N-terminus to the SRP1 nuclear localization signal (NLS) binding site, thus accelerating the release of the NLS-cargo. SRP1 in turn is released from NUP2 by binding of the GSP1-GTP associated export factor CSE1. NUP2 may also have a chromatin boundary/insulator activity through indirect interaction with genomic DNA via CSE1 and blocking of heterochromatin spreading. This Saccharomyces cerevisiae (strain ATCC 204508 / S288c) (Baker's yeast) protein is Nucleoporin NUP2 (NUP2).